Consider the following 82-residue polypeptide: ATP synthase subunit c (82 aa).

2 helical membrane-spanning segments follow: residues 5 to 25 (IASA…IGPG) and 57 to 77 (LAFM…LLFA).

Belongs to the ATPase C chain family. In terms of assembly, F-type ATPases have 2 components, F(1) - the catalytic core - and F(0) - the membrane proton channel. F(1) has five subunits: alpha(3), beta(3), gamma(1), delta(1), epsilon(1). F(0) has four main subunits: a(1), b(1), b'(1) and c(10-14). The alpha and beta chains form an alternating ring which encloses part of the gamma chain. F(1) is attached to F(0) by a central stalk formed by the gamma and epsilon chains, while a peripheral stalk is formed by the delta, b and b' chains.

The protein localises to the cellular thylakoid membrane. F(1)F(0) ATP synthase produces ATP from ADP in the presence of a proton or sodium gradient. F-type ATPases consist of two structural domains, F(1) containing the extramembraneous catalytic core and F(0) containing the membrane proton channel, linked together by a central stalk and a peripheral stalk. During catalysis, ATP synthesis in the catalytic domain of F(1) is coupled via a rotary mechanism of the central stalk subunits to proton translocation. Functionally, key component of the F(0) channel; it plays a direct role in translocation across the membrane. A homomeric c-ring of between 10-14 subunits forms the central stalk rotor element with the F(1) delta and epsilon subunits. The sequence is that of ATP synthase subunit c from Cyanothece sp. (strain PCC 7425 / ATCC 29141).